Reading from the N-terminus, the 189-residue chain is Mitochondrial FAD-linked sulfhydryl oxidase ERV1 (189 aa).

The ERV/ALR sulfhydryl oxidase domain maps to 83 to 183 (DPPDVEQLGR…FDCNFWEKRW (101 aa)). FAD-binding positions include 88–95 (EQLGRSSW), His-99, and Tyr-128. 2 disulfides stabilise this stretch: Cys-130–Cys-133 and Cys-159–Cys-176. Residues 159–171 (CEAH…KLRK) and 182–183 (RW) each bind FAD.

In terms of assembly, homodimer. Interacts with MIA40, forming transient intermolecular disulfide bridges. The cofactor is FAD.

The protein resides in the mitochondrion intermembrane space. It carries out the reaction 2 R'C(R)SH + O2 = R'C(R)S-S(R)CR' + H2O2. In terms of biological role, FAD-dependent sulfhydryl oxidase that catalyzes disulfide bond formation. Required for the import and folding of small cysteine-containing proteins in the mitochondrial intermembrane space (IMS). Forms a redox cycle with MIA40 that involves a disulfide relay system. Important for maintaining the cysteine residues in MIA40 in an oxidized state. Reduced ERV1 is reoxidized by cytochrome c. Required for the maturation of cytoplasmic, but not of mitochondrial Fe/S proteins. The protein is Mitochondrial FAD-linked sulfhydryl oxidase ERV1 (ERV1) of Saccharomyces cerevisiae (strain ATCC 204508 / S288c) (Baker's yeast).